The following is an 82-amino-acid chain: Neuropeptide-like peptide 36 (82 aa).

The sequence is that of Neuropeptide-like peptide 36 (nlp-36) from Caenorhabditis elegans.